Reading from the N-terminus, the 382-residue chain is MGDWSALGKLLDKVQAYSTAGGKVWLSVLFIFRILLLGTAVESAWGDEQSAFRCNTQQPGCENVCYDKSFPISHVRFWVLQIIFVSVPTLLYLAHVFYVMRKEEKLNKKEEELKVAQTDGANVDMHLKQIEIKKFKYGIEEHGKVKMRGGLLRTYIISILFKSVFEVAFLLIQWYIYGFSLSAVYTCKRDPCPHQVDCFLSRPTEKTIFIIFMLVVSLVSLALNIIELFYVFFKGIKDRVKGKSDLYHATTGPLSPSKDRGSPTYAYFNGCSSPTAPLSPMSPPGYKLVTGDRNNSSCRNYNKQASEQNWANYSAEQNRMGQAGSTISNSHAQPFDFPDDAQNSKKLAAGHELQPLAIVDQRPSSRASSRASSRPRPDDLEI.

The Cytoplasmic portion of the chain corresponds to 2-23 (GDWSALGKLLDKVQAYSTAGGK). Ser-5 carries the post-translational modification Phosphoserine. A helical transmembrane segment spans residues 24-44 (VWLSVLFIFRILLLGTAVESA). The Extracellular portion of the chain corresponds to 45 to 76 (WGDEQSAFRCNTQQPGCENVCYDKSFPISHVR). Intrachain disulfides connect Cys-54-Cys-192 and Cys-187-Cys-198. Residues 77–97 (FWVLQIIFVSVPTLLYLAHVF) traverse the membrane as a helical segment. The Cytoplasmic segment spans residues 98–155 (YVMRKEEKLNKKEEELKVAQTDGANVDMHLKQIEIKKFKYGIEEHGKVKMRGGLLRTY). Residue Lys-144 forms a Glycyl lysine isopeptide (Lys-Gly) (interchain with G-Cter in SUMO) linkage. The helical transmembrane segment at 156–176 (IISILFKSVFEVAFLLIQWYI) threads the bilayer. Over 177–207 (YGFSLSAVYTCKRDPCPHQVDCFLSRPTEKT) the chain is Extracellular. Residues 208-228 (IFIIFMLVVSLVSLALNIIEL) traverse the membrane as a helical segment. Over 229–382 (FYVFFKGIKD…SRPRPDDLEI (154 aa)) the chain is Cytoplasmic. Lys-237 is covalently cross-linked (Glycyl lysine isopeptide (Lys-Gly) (interchain with G-Cter in SUMO)). The interaction with NOV stretch occupies residues 244 to 382 (SDLYHATTGP…SRPRPDDLEI (139 aa)). The residue at position 247 (Tyr-247) is a Phosphotyrosine. Phosphoserine occurs at positions 255, 257, and 262. Residues 264–382 (TYAYFNGCSS…SRPRPDDLEI (119 aa)) form an interaction with UBQLN4 region. An S-nitrosocysteine modification is found at Cys-271. Phosphothreonine is present on Thr-275. Residues Ser-306 and Ser-314 each carry the phosphoserine modification. Positions 317-332 (QNRMGQAGSTISNSHA) are enriched in polar residues. A disordered region spans residues 317 to 382 (QNRMGQAGST…SRPRPDDLEI (66 aa)). Residue Ser-325 is modified to Phosphoserine; by CK1. Residue Thr-326 is modified to Phosphothreonine. A phosphoserine; by CK1 mark is found at Ser-328 and Ser-330. 2 positions are modified to phosphoserine: Ser-344 and Ser-365. A compositionally biased stretch (low complexity) spans 362–374 (RPSSRASSRASSR). Ser-368 is subject to Phosphoserine; by PKC/PRKCG and PKC/PRKCD. Ser-369 and Ser-373 each carry phosphoserine.

It belongs to the connexin family. Alpha-type (group II) subfamily. In terms of assembly, a connexon is composed of a hexamer of connexins. Interacts with SGSM3. Interacts with RIC1/CIP150. Interacts with CNST and CSNK1D. Interacts (via C-terminus) with TJP1. Interacts (via C-terminus) with SRC (via SH3 domain). Interacts (not ubiquitinated) with UBQLN4 (via UBA domain). Interacts with NOV. Interacts with TMEM65. Interacts with ANK3/ANKG and PKP2. Phosphorylation at Ser-325, Ser-328 and Ser-330 by CK1 modulates gap junction assembly. Phosphorylated at Ser-368 by PRKCG; phosphorylation induces disassembly of gap junction plaques and inhibition of gap junction activity. Phosphorylation at Ser-368 by PRKCD triggers its internalization into small vesicles leading to proteasome-mediated degradation. Post-translationally, sumoylated with SUMO1, SUMO2 and SUMO3, which may regulate the level of functional Cx43 gap junctions at the plasma membrane. May be desumoylated by SENP1 or SENP2. In terms of processing, S-nitrosylation at Cys-271 is enriched at the muscle endothelial gap junction in arteries, it augments channel permeability and may regulate of smooth muscle cell to endothelial cell communication. Acetylated in the developing cortex; leading to delocalization from the cell membrane.

Its subcellular location is the cell membrane. The protein resides in the cell junction. It localises to the gap junction. The protein localises to the endoplasmic reticulum. Functionally, gap junction protein that acts as a regulator of bladder capacity. A gap junction consists of a cluster of closely packed pairs of transmembrane channels, the connexons, through which materials of low MW diffuse from one cell to a neighboring cell. May play a critical role in the physiology of hearing by participating in the recycling of potassium to the cochlear endolymph. Negative regulator of bladder functional capacity: acts by enhancing intercellular electrical and chemical transmission, thus sensitizing bladder muscles to cholinergic neural stimuli and causing them to contract. May play a role in cell growth inhibition through the regulation of NOV expression and localization. Plays an essential role in gap junction communication in the ventricles. This chain is Gap junction alpha-1 protein (GJA1), found in Erinaceus europaeus (Western European hedgehog).